The chain runs to 158 residues: Putative ribonucleoside-diphosphate reductase small chain B (158 aa).

Belongs to the ribonucleoside diphosphate reductase small chain family.

This Arabidopsis thaliana (Mouse-ear cress) protein is Putative ribonucleoside-diphosphate reductase small chain B (RNR2B).